The chain runs to 167 residues: Transmembrane protein 229B (167 aa).

Residues Met-1–Tyr-14 lie on the Cytoplasmic side of the membrane. A helical membrane pass occupies residues Leu-15–Val-35. Residues Asn-36–Lys-40 are Extracellular-facing. Residues Phe-41–Glu-61 form a helical membrane-spanning segment. Residues Arg-62–Leu-73 are Cytoplasmic-facing. The helical transmembrane segment at Leu-74 to Ile-94 threads the bilayer. The Extracellular segment spans residues Leu-95 to Asp-109. A helical membrane pass occupies residues Phe-110 to Ile-130. The Cytoplasmic portion of the chain corresponds to Met-131–Asp-167.

The protein belongs to the TMEM229 family.

The protein resides in the membrane. This chain is Transmembrane protein 229B (TMEM229B), found in Homo sapiens (Human).